An 81-amino-acid polypeptide reads, in one-letter code: MASKDEILAGLAEIVNEETGLETEAVQLEKSFTEDLDIDSISMMTIVVNAEEKFDVTIPDEEVKNLKTVEDAVNFIDNAQA.

In terms of domain architecture, Carrier spans 2–80; the sequence is ASKDEILAGL…DAVNFIDNAQ (79 aa). O-(pantetheine 4'-phosphoryl)serine is present on Ser40.

It belongs to the acyl carrier protein (ACP) family. 4'-phosphopantetheine is transferred from CoA to a specific serine of apo-ACP by AcpS. This modification is essential for activity because fatty acids are bound in thioester linkage to the sulfhydryl of the prosthetic group.

Its subcellular location is the cytoplasm. Its pathway is lipid metabolism; fatty acid biosynthesis. Carrier of the growing fatty acid chain in fatty acid biosynthesis. This chain is Acyl carrier protein, found in Kocuria rhizophila (strain ATCC 9341 / DSM 348 / NBRC 103217 / DC2201).